The primary structure comprises 212 residues: Thymidylate kinase (212 aa).

10 to 17 is an ATP binding site; sequence GPDGAGKT.

It belongs to the thymidylate kinase family.

The enzyme catalyses dTMP + ATP = dTDP + ADP. In terms of biological role, phosphorylation of dTMP to form dTDP in both de novo and salvage pathways of dTTP synthesis. The protein is Thymidylate kinase of Lactobacillus delbrueckii subsp. bulgaricus (strain ATCC 11842 / DSM 20081 / BCRC 10696 / JCM 1002 / NBRC 13953 / NCIMB 11778 / NCTC 12712 / WDCM 00102 / Lb 14).